The following is a 197-amino-acid chain: MSSKEQKTPEGQAPEEIIMDQHEEIEAVEPEASAEQVDPRDEKVANLEAQLAEAQTRERDGILRVKAEMENLRRRTELDIEKAHKFALEKFINELLPVIDSLDRALEVADKANPDMSAMVEGIELTLKSMLDVVRKFGVEVIAETNVPLDPNVHQAIAMVESDDVAPGNVLGIMQKGYTLNGRTIRAAMVTVAKAKA.

Positions 1–40 are disordered; sequence MSSKEQKTPEGQAPEEIIMDQHEEIEAVEPEASAEQVDPR.

The protein belongs to the GrpE family. Homodimer.

The protein localises to the cytoplasm. Functionally, participates actively in the response to hyperosmotic and heat shock by preventing the aggregation of stress-denatured proteins, in association with DnaK and GrpE. It is the nucleotide exchange factor for DnaK and may function as a thermosensor. Unfolded proteins bind initially to DnaJ; upon interaction with the DnaJ-bound protein, DnaK hydrolyzes its bound ATP, resulting in the formation of a stable complex. GrpE releases ADP from DnaK; ATP binding to DnaK triggers the release of the substrate protein, thus completing the reaction cycle. Several rounds of ATP-dependent interactions between DnaJ, DnaK and GrpE are required for fully efficient folding. The chain is Protein GrpE from Escherichia coli (strain K12 / DH10B).